Here is a 162-residue protein sequence, read N- to C-terminus: Caveolin-2 (162 aa).

Residues 1 to 86 (MGLETEKADV…FEISKYVIYK (86 aa)) are Cytoplasmic-facing. Phosphotyrosine; by SRC is present on Tyr19. Phosphoserine is present on residues Ser20 and Ser23. Tyr27 is modified (phosphotyrosine; by SRC). Ser36 is subject to Phosphoserine. The segment at residues 87–107 (FLTLFLAIPLAFAAGILFATL) is an intramembrane region (helical). Residues 108–162 (SCLHIWIIMPFVKTCLMVLPSVQTIWKSITDVVIAPLCTSVGRSFSSVSLQLSHD) are Cytoplasmic-facing.

Belongs to the caveolin family. In terms of assembly, monomer or homodimer. Interacts with CAV1; the interaction forms a stable heterooligomeric complex that is required for targeting to lipid rafts and for caveolae formation. Tyrosine phosphorylated forms do not form heterooligomers with the Tyr-19-phosphorylated form existing as a monomer or dimer, and the Tyr-27-form as a monomer only. Interacts (tyrosine phosphorylated form) with the SH2 domain-containing proteins, RASA1, NCK1 and SRC. Interacts (tyrosine phosphorylated form) with INSR, the interaction (Tyr-27-phosphorylated form) is increased on insulin stimulation. Interacts (Tyr-19 phosphorylated form) with MAPK1 (phosphorylated form); the interaction, promoted by insulin, leads to nuclear location and MAPK1 activation. Interacts with STAT3; the interaction is increased on insulin-induced tyrosine phosphorylation leading to STAT activation. In terms of processing, phosphorylated on serine and tyrosine residues. CAV1 promotes phosphorylation on Ser-23 which then targets the complex to the plasma membrane, lipid rafts and caveolae. Phosphorylation on Ser-36 appears to modulate mitosis in endothelial cells. Phosphorylation on both Tyr-19 and Tyr-27 is required for insulin-induced 'Ser-727' phosphorylation of STAT3 and its activation. Phosphorylation on Tyr-19 is required for insulin-induced phosphorylation of MAPK1 and DNA binding of STAT3. Tyrosine phosphorylation is induced by both EGF and insulin (By. similarity).

Its subcellular location is the nucleus. The protein localises to the cytoplasm. The protein resides in the golgi apparatus membrane. It localises to the cell membrane. It is found in the membrane. Its subcellular location is the caveola. Functionally, may act as a scaffolding protein within caveolar membranes. Interacts directly with G-protein alpha subunits and can functionally regulate their activity. Acts as an accessory protein in conjunction with CAV1 in targeting to lipid rafts and driving caveolae formation. The Ser-36 phosphorylated form has a role in modulating mitosis in endothelial cells. Positive regulator of cellular mitogenesis of the MAPK signaling pathway. Required for the insulin-stimulated nuclear translocation and activation of MAPK1 and STAT3, and the subsequent regulation of cell cycle progression. In Neofelis nebulosa (Clouded leopard), this protein is Caveolin-2 (CAV2).